A 109-amino-acid chain; its full sequence is Transcription initiation factor IIA subunit 2 (109 aa).

Belongs to the TFIIA subunit 2 family. In terms of assembly, TFIIA is a heterodimer composed of the large toa1 and the small toa2 subunits.

The protein localises to the nucleus. The protein resides in the cytoplasm. Functionally, TFIIA is a component of the transcription machinery of RNA polymerase II and plays an important role in transcriptional activation. TFIIA in a complex with tbp mediates transcriptional activity. The protein is Transcription initiation factor IIA subunit 2 (toa2) of Schizosaccharomyces pombe (strain 972 / ATCC 24843) (Fission yeast).